The sequence spans 420 residues: Homeobox-containing protein 1 (420 aa).

Residues 18–49 (DEPRFTIEQIDLLQRLRRTGMTKHEILHALET) enclose the HNF-p1 domain. Residues 56–139 (EHSDKFGRRS…GKMSPTRYHA (84 aa)) form a disordered region. Residue Lys-60 forms a Glycyl lysine isopeptide (Lys-Gly) (interchain with G-Cter in SUMO2) linkage. 2 stretches are compositionally biased toward low complexity: residues 64–73 (RSSYGGSSYG) and 81–93 (ASSSTATASTQTQ). Polar residues predominate over residues 94 to 132 (HSGMSPSPSNSYDTSPQPCTTNQNGRENNERLSTSNGKM). Lys-131 participates in a covalent cross-link: Glycyl lysine isopeptide (Lys-Gly) (interchain with G-Cter in SUMO2). A POU-specific atypical domain is found at 145–241 (RSYSFEASEE…PGATLSMRPA (97 aa)). A Phosphoserine modification is found at Ser-148. Lys-161 participates in a covalent cross-link: Glycyl lysine isopeptide (Lys-Gly) (interchain with G-Cter in SUMO2). Position 170 is a phosphoserine (Ser-170). Glycyl lysine isopeptide (Lys-Gly) (interchain with G-Cter in SUMO2) cross-links involve residues Lys-174, Lys-217, and Lys-310. Positions 267 to 341 (RRGSRFTWRK…NRRKEIKRRA (75 aa)) form a DNA-binding region, homeobox. The disordered stretch occupies residues 353–385 (IDVQSPGGHSNSDDVDGNDYSEQDDSTSHSDHQ). Over residues 365-377 (DDVDGNDYSEQDD) the composition is skewed to acidic residues. A Glycyl lysine isopeptide (Lys-Gly) (interchain with G-Cter in SUMO1); alternate cross-link involves residue Lys-413. Residue Lys-413 forms a Glycyl lysine isopeptide (Lys-Gly) (interchain with G-Cter in SUMO2); alternate linkage.

As to quaternary structure, associates with the telomerase holoenzyme complex. Interacts with DKC1, XRCC6 and COIL. As to expression, ubiquitous. Detected in pancreas, brain, spleen, placenta, prostate, thymus, liver, heart, bone marrow, skeletal muscle, stomach, uterus, testis, kidney, ovary, colon, lung, cardiac muscle and thyroid gland.

It localises to the nucleus. Its subcellular location is the cytoplasm. The protein localises to the chromosome. It is found in the telomere. The protein resides in the cajal body. It localises to the PML body. Binds directly to 5'-TTAGGG-3' repeats in telomeric DNA. Associates with the telomerase complex at sites of active telomere processing and positively regulates telomere elongation. Important for TERT binding to chromatin, indicating a role in recruitment of the telomerase complex to telomeres. Also plays a role in the alternative lengthening of telomeres (ALT) pathway in telomerase-negative cells where it promotes formation and/or maintenance of ALT-associated promyelocytic leukemia bodies (APBs). Enhances formation of telomere C-circles in ALT cells, suggesting a possible role in telomere recombination. Might also be involved in the DNA damage response at telomeres. The sequence is that of Homeobox-containing protein 1 from Homo sapiens (Human).